Here is a 240-residue protein sequence, read N- to C-terminus: MSELSYRRILLKLSGEALMGDGDYGIDPKVINRLAHEVIEAQQAGAQVALVIGGGNIFRGAGLAASGMDRVTGDHMGMLATVINALAMQDALEKLGAKVRVMSAIKINDVCEDFIRRRAIRHLEKGRIAIFAAGTGNPFFTTDSGAALRAIEIGADLLLKATKVDGVYDKDPKKHTDAVRYDSLTYDRVILQGLEVMDTAAFALARDSDLPLRIFGMSEPGVLLRILHGEQIGTLVQGRS.

Lys-12–Gly-15 contributes to the ATP binding site. Gly-54 contributes to the UMP binding site. Residues Gly-55 and Arg-59 each coordinate ATP. Residues Asp-74 and Thr-135–Thr-142 contribute to the UMP site. The ATP site is built by Thr-162, Tyr-168, and Asp-171.

This sequence belongs to the UMP kinase family. Homohexamer.

Its subcellular location is the cytoplasm. It catalyses the reaction UMP + ATP = UDP + ADP. Its pathway is pyrimidine metabolism; CTP biosynthesis via de novo pathway; UDP from UMP (UMPK route): step 1/1. Its activity is regulated as follows. Inhibited by UTP. Functionally, catalyzes the reversible phosphorylation of UMP to UDP. This Xanthomonas axonopodis pv. citri (strain 306) protein is Uridylate kinase.